The primary structure comprises 121 residues: uncharacterized protein (121 aa).

An ATP-binding site is contributed by 77 to 84; it reads AALSFGKT.

This is an uncharacterized protein from Saccharomyces cerevisiae (strain ATCC 204508 / S288c) (Baker's yeast).